The primary structure comprises 678 residues: Methionine--tRNA ligase (678 aa).

A 'HIGH' region motif is present at residues Pro12–His22. Residues Cys143, Cys146, Cys156, and Cys159 each contribute to the Zn(2+) site. Positions Lys328–Ser332 match the 'KMSKS' region motif. An ATP-binding site is contributed by Lys331. A tRNA-binding domain is found at Asp577 to Lys678.

Belongs to the class-I aminoacyl-tRNA synthetase family. MetG type 1 subfamily. In terms of assembly, homodimer. It depends on Zn(2+) as a cofactor.

Its subcellular location is the cytoplasm. It carries out the reaction tRNA(Met) + L-methionine + ATP = L-methionyl-tRNA(Met) + AMP + diphosphate. Functionally, is required not only for elongation of protein synthesis but also for the initiation of all mRNA translation through initiator tRNA(fMet) aminoacylation. This is Methionine--tRNA ligase from Acidithiobacillus ferrooxidans (strain ATCC 23270 / DSM 14882 / CIP 104768 / NCIMB 8455) (Ferrobacillus ferrooxidans (strain ATCC 23270)).